The chain runs to 97 residues: Putative septation protein SpoVG (97 aa).

This sequence belongs to the SpoVG family.

Its function is as follows. Could be involved in septation. This is Putative septation protein SpoVG from Borrelia garinii subsp. bavariensis (strain ATCC BAA-2496 / DSM 23469 / PBi) (Borreliella bavariensis).